The sequence spans 57 residues: Large ribosomal subunit protein bL32 (57 aa).

The segment at methionine 1 to arginine 23 is disordered.

Belongs to the bacterial ribosomal protein bL32 family.

The chain is Large ribosomal subunit protein bL32 from Natranaerobius thermophilus (strain ATCC BAA-1301 / DSM 18059 / JW/NM-WN-LF).